An 845-amino-acid chain; its full sequence is Proto-oncogene vav (845 aa).

The Calponin-homology (CH) domain maps to 1 to 119 (MELWRQCTHW…YTLSALSWTP (119 aa)). The DH domain occupies 194 to 373 (KRCCCLREIQ…RDLAQCVNEV (180 aa)). Residues 402-504 (RPKIDGELKI…WMEQFEMAIS (103 aa)) form the PH domain. The segment at 515 to 564 (GHDFQMFSFEETTSCKACQMLLRGTFYQGYRCYRCRAPAHKECLGRVPPC) adopts a Phorbol-ester/DAG-type zinc-finger fold. Residues 592 to 660 (LGLPKMEVFQ…PCNRVHPYVH (69 aa)) form the SH3 1 domain. The SH2 domain occupies 671 to 765 (WYAGPMERAG…SLDTTLQFPY (95 aa)). The region spanning 782–842 (KYFGTAKARY…PSNYVEEDYS (61 aa)) is the SH3 2 domain. Y826 and Y844 each carry phosphotyrosine.

As to quaternary structure, interacts with SHB. Interacts with APS, DOCK2, GRB2, GRB3, DOCK2, SLA, TEC and ZNF655/VIK. Interacts with SIAH2; without leading to its degradation. Associates with BLNK, PLCG1, GRB2 and NCK1 in a B-cell antigen receptor-dependent fashion. Interacts with CBLB; which inhibits tyrosine phosphorylation and down-regulates activity. May interact with CCPG1. Interacts with CLNK. Interacts with THEMIS2. Interacts with NEK3 and this interaction is prolactin-dependent. Interacts with ITK. Interacts with PTK2B/PYK2. Interacts with HCK. Interacts with PTK2B/PYK2. Interacts (via SH2 domain) with SYK. Interacts with ANKRD54. Interacts with CD6. Interacts with isoform 2 of CRACR2A. Interacts with LCP2; this interaction plays a role in TCR-mediated cytokine production. In terms of processing, phosphorylated by FYN. Phosphorylated on tyrosine residues by HCK in response to IFNG and bacterial lipopolysaccharide (LPS). Widely expressed in hematopoietic cells but not in other cell types. Found in the spleen and lung.

In terms of biological role, couples tyrosine kinase signals with the activation of the Rho/Rac GTPases, thus leading to cell differentiation and/or proliferation. In Mus musculus (Mouse), this protein is Proto-oncogene vav (Vav1).